The sequence spans 121 residues: MVHMHITAWALGLILFFVAYSLYSAGRKGKGVHMGLRLMYIFIIVTGFMLYMSIVKTATGSMHMWYGLKMLAGILVIGGMEMVLVKMSKNKPTGAVWGLFIVALVAVIYLGLKLPIGWKVF.

Helical transmembrane passes span 6 to 26 (ITAW…YSAG), 38 to 58 (LMYI…VKTA), 65 to 85 (WYGL…MVLV), and 92 to 112 (PTGA…YLGL).

It belongs to the UPF0344 family.

It localises to the cell membrane. This Bacillus cereus (strain ATCC 10987 / NRS 248) protein is UPF0344 protein BCE_1257.